The sequence spans 524 residues: Bifunctional purine biosynthesis protein PurH (524 aa).

An MGS-like domain is found at 1 to 144 (MTRRALVSVS…KNSAHVGVVV (144 aa)).

This sequence belongs to the PurH family.

The catalysed reaction is (6R)-10-formyltetrahydrofolate + 5-amino-1-(5-phospho-beta-D-ribosyl)imidazole-4-carboxamide = 5-formamido-1-(5-phospho-D-ribosyl)imidazole-4-carboxamide + (6S)-5,6,7,8-tetrahydrofolate. The enzyme catalyses IMP + H2O = 5-formamido-1-(5-phospho-D-ribosyl)imidazole-4-carboxamide. It participates in purine metabolism; IMP biosynthesis via de novo pathway; 5-formamido-1-(5-phospho-D-ribosyl)imidazole-4-carboxamide from 5-amino-1-(5-phospho-D-ribosyl)imidazole-4-carboxamide (10-formyl THF route): step 1/1. The protein operates within purine metabolism; IMP biosynthesis via de novo pathway; IMP from 5-formamido-1-(5-phospho-D-ribosyl)imidazole-4-carboxamide: step 1/1. The protein is Bifunctional purine biosynthesis protein PurH of Anaeromyxobacter sp. (strain K).